A 280-amino-acid polypeptide reads, in one-letter code: Manganese import system permease protein ScaB (280 aa).

Helical transmembrane passes span 18–38 (ALIT…FIIL), 61–81 (ILGI…SILI), 94–114 (TAIG…IGVA), 139–159 (TIGV…PLLL), 174–194 (VKIY…TAMQ), 196–216 (VGTI…YLYA), 222–242 (MMLL…FIGY), and 246–266 (IAVG…SFFI).

It belongs to the ABC-3 integral membrane protein family.

It is found in the cell membrane. Its function is as follows. Part of an ABC transporter complex involved in manganese import. The polypeptide is Manganese import system permease protein ScaB (Streptococcus parasanguinis).